We begin with the raw amino-acid sequence, 447 residues long: Argininosuccinate synthase (447 aa).

Residues 17 to 25 and A43 each bind ATP; that span reads AFSGGLDTS. Y99 contacts L-citrulline. Positions 129 and 131 each coordinate ATP. L-aspartate contacts are provided by T131, N135, and D136. N135 is a binding site for L-citrulline. Residue D136 coordinates ATP. Residues R139 and S192 each coordinate L-citrulline. D194 serves as a coordination point for ATP. 3 residues coordinate L-citrulline: T201, E203, and E280.

Belongs to the argininosuccinate synthase family. Type 2 subfamily. As to quaternary structure, homotetramer.

Its subcellular location is the cytoplasm. The enzyme catalyses L-citrulline + L-aspartate + ATP = 2-(N(omega)-L-arginino)succinate + AMP + diphosphate + H(+). It functions in the pathway amino-acid biosynthesis; L-arginine biosynthesis; L-arginine from L-ornithine and carbamoyl phosphate: step 2/3. In Escherichia coli O9:H4 (strain HS), this protein is Argininosuccinate synthase.